Here is a 254-residue protein sequence, read N- to C-terminus: Coproheme decarboxylase (254 aa).

Fe-coproporphyrin III contacts are provided by residues R136, 150-154 (YPMDK), H177, Q190, and S228. The active site involves Y150.

The protein belongs to the ChdC family. Type 1 subfamily. Fe-coproporphyrin III serves as cofactor.

The catalysed reaction is Fe-coproporphyrin III + 2 H2O2 + 2 H(+) = heme b + 2 CO2 + 4 H2O. It catalyses the reaction Fe-coproporphyrin III + H2O2 + H(+) = harderoheme III + CO2 + 2 H2O. It carries out the reaction harderoheme III + H2O2 + H(+) = heme b + CO2 + 2 H2O. Its pathway is porphyrin-containing compound metabolism; protoheme biosynthesis. Involved in coproporphyrin-dependent heme b biosynthesis. Catalyzes the decarboxylation of Fe-coproporphyrin III (coproheme) to heme b (protoheme IX), the last step of the pathway. The reaction occurs in a stepwise manner with a three-propionate intermediate. The sequence is that of Coproheme decarboxylase from Bacillus licheniformis (strain ATCC 14580 / DSM 13 / JCM 2505 / CCUG 7422 / NBRC 12200 / NCIMB 9375 / NCTC 10341 / NRRL NRS-1264 / Gibson 46).